Consider the following 232-residue polypeptide: Small ribosomal subunit protein uS2 (232 aa).

The protein belongs to the universal ribosomal protein uS2 family.

The chain is Small ribosomal subunit protein uS2 from Baumannia cicadellinicola subsp. Homalodisca coagulata.